A 360-amino-acid chain; its full sequence is C-C chemokine receptor type 4 (360 aa).

Residues 1-39 are Extracellular-facing; the sequence is MNPTDIADTTLDESIYSNYYLYESIPKPCTKEGIKAFGE. Residues 40–67 form a helical membrane-spanning segment; the sequence is LFLPPLYSLVFVFGLLGNSVVVLVLFKY. Residues 68 to 77 lie on the Cytoplasmic side of the membrane; that stretch reads KRLRSMTDVY. Residues 78 to 98 form a helical membrane-spanning segment; the sequence is LLNLAISDLLFVFSLPFWGYY. Residues 99 to 111 lie on the Extracellular side of the membrane; sequence AADQWVFGLGLCK. The cysteines at positions 110 and 187 are disulfide-linked. A helical membrane pass occupies residues 112-133; the sequence is MISWMYLVGFYSGIFFVMLMSI. Over 134 to 150 the chain is Cytoplasmic; it reads DRYLAIVHAVFSLRART. The chain crosses the membrane as a helical span at residues 151-175; that stretch reads LTYGVITSLATWSVAVFASLPGFLF. At 176–206 the chain is on the extracellular side; sequence STCYTERNHTYCKTKYSLNSTTWKVLSSLEI. N-linked (GlcNAc...) asparagine glycans are attached at residues asparagine 183 and asparagine 194. A helical membrane pass occupies residues 207-226; that stretch reads NILGLVIPLGIMLFCYSMII. Over 227–242 the chain is Cytoplasmic; the sequence is RTLQHCKNEKKNKAVK. The helical transmembrane segment at 243–267 threads the bilayer; it reads MIFAVVVLFLGFWTPYNIVLFLETL. At 268-284 the chain is on the extracellular side; that stretch reads VELEVLQDCTFERYLDY. Residues 285-308 traverse the membrane as a helical segment; it reads AIQATETLAFVHCCLNPIIYFFLG. Topologically, residues 309-360 are cytoplasmic; it reads EKFRKYILQLFKTCRGLFVLCQYCGLLQIYSADTPSSSYTQSTMDHDLHDAL.

Belongs to the G-protein coupled receptor 1 family. Post-translationally, in natural killer cells, CCL22 binding induces phosphorylation on yet undefined Ser/Thr residues, most probably by beta-adrenergic receptor kinases 1 and 2. As to expression, predominantly expressed in the thymus, in peripheral blood leukocytes, including T-cells, mostly CD4+ cells, and basophils, and in platelets; at lower levels, in the spleen and in monocytes. Detected also in macrophages, IL-2-activated natural killer cells and skin-homing memory T-cells, mostly the ones expressing the cutaneous lymphocyte antigen (CLA). Expressed in brain microvascular and coronary artery endothelial cells.

Its subcellular location is the cell membrane. High affinity receptor for the C-C type chemokines CCL17/TARC, CCL22/MDC and CKLF isoform 1/CKLF1. The activity of this receptor is mediated by G(i) proteins which activate a phosphatidylinositol-calcium second messenger system. Can function as a chemoattractant homing receptor on circulating memory lymphocytes and as a coreceptor for some primary HIV-2 isolates. In the CNS, could mediate hippocampal-neuron survival. This is C-C chemokine receptor type 4 (CCR4) from Homo sapiens (Human).